The following is a 311-amino-acid chain: Pyrimidine-specific ribonucleoside hydrolase RihA (311 aa).

His240 is a catalytic residue.

It belongs to the IUNH family. RihA subfamily.

Hydrolyzes cytidine or uridine to ribose and cytosine or uracil, respectively. This chain is Pyrimidine-specific ribonucleoside hydrolase RihA, found in Shigella boydii serotype 4 (strain Sb227).